We begin with the raw amino-acid sequence, 793 residues long: E3 UFM1-protein ligase 1 (793 aa).

Ala2 carries the N-acetylalanine modification. Residues 2-200 form a mediates interaction with DDRGK1 region; it reads ADAWEEIRRL…RGLFSAITRP (199 aa). A required for E3 UFM1-protein ligase activity region spans residues 2 to 212; the sequence is ADAWEEIRRL…VNSLVSKYGF (211 aa). Positions 121–250 are involved in CDK5RAP3-binding; the sequence is DQLSEEVNDK…KAVFVPDIYS (130 aa). The mediates interaction with TRIP4 stretch occupies residues 200-400; sequence PTPVNSLVSK…NPVHLITEED (201 aa). The tract at residues 410 to 473 is disordered; that stretch reads VNTSKKDKKD…SSHGGKKKPD (64 aa). Arg433 bears the Omega-N-methylarginine mark. Residues Ser458 and Ser462 each carry the phosphoserine modification. Positions 490-683 are mediates interaction with CDK5RAP3; that stretch reads IQDAPEEFIS…QLKVTEDPAL (194 aa). At Thr535 the chain carries Phosphothreonine. The segment at 742–765 is disordered; it reads NKKTGQGEDPSSDELDKEQHDVTN. Residues Ser752 and Ser753 each carry the phosphoserine modification.

Belongs to the UFL1 family. Catalytic component of the UFM1 ribosome E3 ligase (UREL) complex, composed of UFL1, DDRGK1 and CDK5RAP3. Interacts with E2-like enzyme UFC1. Interacts with RELA. Interacts with NBN; promoting recruitment to double-strand breaks following DNA damage. Interacts (when phosphorylated) with YWHAG/14-3-3-gamma; sequestering UFL1 and preventing its association with PDCD1/PD-1 substrate. Post-translationally, ubiquitinated, leading to its degradation by the proteasome. Interaction with CDK5RAP3 protects both proteins against ubiquitination and degradation via the proteasome. In terms of processing, phosphorylated at Ser-462 by ATM, enhancing protein ligase activity and promoting ATM activation in a positive feedback loop. Phosphorylation at Thr-535 by AMPK promotes its interaction with YWHAG/14-3-3-gamma, thereby preventing UFL1 association with PDCD1/PD-1 substrate. Ubiquitously expressed with higher expression in pancreatic islets and other secretory tissues. In the embryonic brain at 17 dpc, detected in Sox2-positive neural stem cells and in Slc1a3/GLAST-positive radial glia. In perinatal brain, highly expressed in Slc1a3-positive Bergmann glia of the cerebellum. Continues to be expressed in Bergmann glia of adult brain at 16 weeks. Expressed in adult heart. Highly expressed in the intestinal exocrine cells.

Its subcellular location is the endoplasmic reticulum membrane. It is found in the cytoplasm. It localises to the cytosol. The protein resides in the nucleus. The protein localises to the chromosome. In terms of biological role, E3 protein ligase that mediates ufmylation, the covalent attachment of the ubiquitin-like modifier UFM1 to lysine residues on target proteins, and which plays a key role in various processes, such as ribosome recycling, response to DNA damage, interferon response or reticulophagy (also called ER-phagy). Catalyzes ufmylation of many protein, such as CD274/PD-L1, CDK5RAP3, CYB5R3, DDRGK1, EIF6, histone H4, MRE11, P4HB, PDCD1/PD-1, TRIP4, RPN1, RPS20/uS10, RPL10/uL16, RPL26/uL24, SYVN1/HRD1 and TP53/p53. As part of the UREL complex, plays a key role in ribosome recycling by catalyzing mono-ufmylation of RPL26/uL24 subunit of the 60S ribosome. Ufmylation of RPL26/uL24 occurs on free 60S ribosomes following ribosome dissociation: it weakens the junction between post-termination 60S subunits and SEC61 translocons, promoting release and recycling of the large ribosomal subunit from the endoplasmic reticulum membrane. Ufmylation of RPL26/uL24 and subsequent 60S ribosome recycling either take place after normal termination of translation or after ribosome stalling during cotranslational translocation at the endoplasmic reticulum. Involved in reticulophagy in response to endoplasmic reticulum stress by mediating ufmylation of proteins such as CYB5R3 and RPN1, thereby promoting lysosomal degradation of ufmylated proteins. Ufmylation in response to endoplasmic reticulum stress is essential for processes such as hematopoiesis, blood vessel morphogenesis or inflammatory response. Mediates ufmylation of DDRGK1 and CDK5RAP3; the role of these modifications is however unclear: as both DDRGK1 and CDK5RAP3 act as substrate adapters for ufmylation, it is uncertain whether ufmylation of these proteins is a collateral effect or is required for ufmylation. Acts as a negative regulator of T-cell activation by mediating ufmylation and stabilization of PDCD1/PD-1. Also involved in the response to DNA damage: recruited to double-strand break sites following DNA damage and mediates monoufmylation of histone H4 and ufmylation of MRE11. Mediates ufmylation of TP53/p53, promoting its stability. Catalyzes ufmylation of TRIP4, thereby playing a role in nuclear receptor-mediated transcription. Required for hematopoietic stem cell function and hematopoiesis. The protein is E3 UFM1-protein ligase 1 of Mus musculus (Mouse).